The chain runs to 228 residues: Phosphoribosylformylglycinamidine synthase subunit PurQ (228 aa).

The Glutamine amidotransferase type-1 domain maps to 2 to 225; it reads KAAVISFPGS…INQTEGADVR (224 aa). C86 acts as the Nucleophile in catalysis. Catalysis depends on residues H194 and E196.

In terms of assembly, part of the FGAM synthase complex composed of 1 PurL, 1 PurQ and 2 PurS subunits.

It is found in the cytoplasm. It catalyses the reaction N(2)-formyl-N(1)-(5-phospho-beta-D-ribosyl)glycinamide + L-glutamine + ATP + H2O = 2-formamido-N(1)-(5-O-phospho-beta-D-ribosyl)acetamidine + L-glutamate + ADP + phosphate + H(+). The enzyme catalyses L-glutamine + H2O = L-glutamate + NH4(+). It participates in purine metabolism; IMP biosynthesis via de novo pathway; 5-amino-1-(5-phospho-D-ribosyl)imidazole from N(2)-formyl-N(1)-(5-phospho-D-ribosyl)glycinamide: step 1/2. In terms of biological role, part of the phosphoribosylformylglycinamidine synthase complex involved in the purines biosynthetic pathway. Catalyzes the ATP-dependent conversion of formylglycinamide ribonucleotide (FGAR) and glutamine to yield formylglycinamidine ribonucleotide (FGAM) and glutamate. The FGAM synthase complex is composed of three subunits. PurQ produces an ammonia molecule by converting glutamine to glutamate. PurL transfers the ammonia molecule to FGAR to form FGAM in an ATP-dependent manner. PurS interacts with PurQ and PurL and is thought to assist in the transfer of the ammonia molecule from PurQ to PurL. The sequence is that of Phosphoribosylformylglycinamidine synthase subunit PurQ from Lacticaseibacillus casei (strain BL23) (Lactobacillus casei).